Consider the following 352-residue polypeptide: Selenide, water dikinase (352 aa).

The active site involves cysteine 23. ATP-binding positions include lysine 26 and 54–56; that span reads SRD. Residue aspartate 57 participates in Mg(2+) binding. ATP-binding positions include aspartate 74, aspartate 97, and 145 to 147; that span reads GHS. Residue aspartate 97 participates in Mg(2+) binding. Mg(2+) is bound at residue aspartate 233.

This sequence belongs to the selenophosphate synthase 1 family. Class I subfamily. Homodimer. Mg(2+) is required as a cofactor.

The enzyme catalyses hydrogenselenide + ATP + H2O = selenophosphate + AMP + phosphate + 2 H(+). Functionally, synthesizes selenophosphate from selenide and ATP. This chain is Selenide, water dikinase, found in Shewanella baltica (strain OS223).